A 407-amino-acid polypeptide reads, in one-letter code: Membrane protein MosC (407 aa).

A disordered region spans residues 1-24 (MTRTSPRHHAPSETKRRVPMGGVH). 11 helical membrane passes run 31-51 (LTIT…AAWA), 69-89 (GVLL…AGYF), 109-129 (ALVL…IVLF), 157-177 (AFLH…FGVI), 186-206 (SVTL…HLLD), 225-245 (LLMF…IAEW), 255-275 (QVTD…MIAG), 290-310 (ALIA…LFMP), 316-336 (LAGF…IFSE), 347-367 (VGLT…PPII), and 377-397 (GRAL…SVFF).

It localises to the cell membrane. Its function is as follows. May be a membrane transport protein that could either transport a precursor for rhizopine biosynthesis into bacteroids or the finished product from the bacteroids. In Rhizobium meliloti (Ensifer meliloti), this protein is Membrane protein MosC (mosC).